The chain runs to 295 residues: MPRGPASLLLLVLASHCCLGSARGLFLFGQPDFSYKRSNCKPIPANLQLCHGIEYQNMRLPNLLGHETMKEVLEQAGAWIPLVMKQCHPDTKKFLCSLFAPVCLDDLDETIQPCHSLCVQVKDRCAPVMSAFGFPWPDMLECDRFPQDNDLCIPLASSDHLLPATEEAPKVCEACKTKNEDDNDIMETLCKNDFALKIKVKEITYINRDTKIILETKSKTIYKLNGVSERDLKKSVLWLKDSLQCTCEEMNDINAPYLVMGQKQGGELVITSVKRWQKGQREFKRISRSIRKLQC.

Residues 1–24 form the signal peptide; it reads MPRGPASLLLLVLASHCCLGSARG. In terms of domain architecture, FZ spans 35-155; the sequence is YKRSNCKPIP…PQDNDLCIPL (121 aa). 8 disulfides stabilise this stretch: Cys-40–Cys-103, Cys-50–Cys-96, Cys-87–Cys-125, Cys-114–Cys-152, Cys-118–Cys-142, Cys-172–Cys-245, Cys-175–Cys-247, and Cys-190–Cys-295. Positions 172–295 constitute an NTR domain; it reads CEACKTKNED…ISRSIRKLQC (124 aa).

Belongs to the secreted frizzled-related protein (sFRP) family. In terms of tissue distribution, highly expressed in the eye. Weaker expression in heart and lung.

Its subcellular location is the secreted. Functionally, soluble frizzled-related proteins (sFRPS) function as modulators of Wnt signaling through direct interaction with Wnts. They have a role in regulating cell growth and differentiation in specific cell types. SFRP2 may be important for eye retinal development and for myogenesis. The sequence is that of Secreted frizzled-related protein 2 from Mus musculus (Mouse).